Reading from the N-terminus, the 451-residue chain is Tubulin gamma-1 chain (451 aa).

Phosphoserine; by BRSK1 is present on S131. Residue 142 to 148 (AGGTGSG) participates in GTP binding.

This sequence belongs to the tubulin family. In terms of assembly, component of the gamma-tubulin ring complex (gTuRC) consisting of TUBGCP2, TUBGCP3, TUBGCP4, TUBGCP5 and TUBGCP6 and gamma-tubulin TUBG1 or TUBG2. TUBGCP2, TUBGCP3, TUBGCP4, TUBGCP5 and TUBGCP6 assemble in a 5:5:2:1:1 stoichiometry; each is associated with a gamma-tubulin, thereby arranging 14 gamma-tubulins in a helical manner. Gamma-tubulin at the first position is blocked by TUBGCP3 at the last position, allowing 13 protafilaments to grow into a microtubule. The gTuRC (via TUBGCP3 and TUBGCP6) interacts with ACTB and MZT1; the interactions form a luminal bridge that stabilizes the initial structure during complex assembly. The gTuRC (via TUBGCP2) interacts with MZT2A/MZT2B and CDK5RAP2 (via CM1 motif); the interactions play a role in gTuRC activation. Interacts with alpha-beta tubulin heterodimers; the interaction allows microtubules to nucleate from the gTuRC. Interacts with B9D2. Interacts with CDK5RAP2; the interaction is leading to centrosomal localization of TUBG1 and CDK5RAP2. Interacts with CIMAP3. Interacts with SAS6 and NUP62 at the centrosome. Interacts with EML3 (phosphorylated at 'Thr-881') and HAUS8. Interacts with DNM2; this interaction may participate in centrosome cohesion. Interacts with CCDC66. Phosphorylation at Ser-131 by BRSK1 regulates centrosome duplication, possibly by mediating relocation of gamma-tubulin and its associated proteins from the cytoplasm to the centrosome.

The protein resides in the cytoplasm. Its subcellular location is the cytoskeleton. The protein localises to the microtubule organizing center. It is found in the centrosome. It localises to the spindle. Tubulin is the major constituent of microtubules, protein filaments consisting of alpha- and beta-tubulin heterodimers. Gamma-tubulin is a key component of the gamma-tubulin ring complex (gTuRC) which mediates microtubule nucleation. The gTuRC regulates the minus-end nucleation of alpha-beta tubulin heterodimers that grow into microtubule protafilaments, a critical step in centrosome duplication and spindle formation. The polypeptide is Tubulin gamma-1 chain (Mus musculus (Mouse)).